Consider the following 339-residue polypeptide: Phenylalanine--tRNA ligase alpha subunit (339 aa).

Glutamate 250 serves as a coordination point for Mg(2+).

Belongs to the class-II aminoacyl-tRNA synthetase family. Phe-tRNA synthetase alpha subunit type 1 subfamily. In terms of assembly, tetramer of two alpha and two beta subunits. The cofactor is Mg(2+).

It is found in the cytoplasm. It catalyses the reaction tRNA(Phe) + L-phenylalanine + ATP = L-phenylalanyl-tRNA(Phe) + AMP + diphosphate + H(+). The chain is Phenylalanine--tRNA ligase alpha subunit from Flavobacterium psychrophilum (strain ATCC 49511 / DSM 21280 / CIP 103535 / JIP02/86).